Consider the following 408-residue polypeptide: MKDIEGLLGLCVCFVGLPASGKTSSAMKLSRYLTWMSVSTHLYDTKEIDNSLSENSNSDSENLAKTLSPIFDNLESVFKKGTDVAILDFNQCTLKFRKSIVELAKARNMLLMFVEVVCTNQKIIDENITDMCQHSPYFKSFPFEESKNKILDSIHEYEKHYTPLSEAEECTFVRIVDFGAELIVHKLENYLESRIVYYLSNLRTRRRSIWLSRHGESQFNVEGKIGGDSSLSPQGLKYAALLPEYVAKFSIGEKGLTVWTSSMARTIQTARHLNCQKLEWRALDELDAGTCDGFTYDYIEQNFPHEAELRNNDKFHYRYRGGESYMDVVRRLEPIIMELERQGDVFIICHQAILRCIYGYYHNLSLEELPFINVPLHTIIKLTPMTYETIEERVTVPISAVSTQRGKH.

16-24 (GLPASGKTS) is a binding site for ATP. Residue Asp-88 is part of the active site. 127 to 132 (NITDMC) serves as a coordination point for ATP. Tyr-157 contacts beta-D-fructose 6-phosphate. Arg-213 contributes to the beta-D-fructose 2,6-bisphosphate binding site. His-214 (tele-phosphohistidine intermediate) is an active-site residue. Beta-D-fructose 2,6-bisphosphate is bound by residues Asn-220 and Gly-226. The active-site Proton donor/acceptor is Glu-285. 6 residues coordinate beta-D-fructose 2,6-bisphosphate: Tyr-296, Arg-310, Lys-314, Tyr-325, Gln-351, and Arg-355. Residue 307–310 (AELR) participates in ATP binding. ATP is bound by residues 351–355 (QAILR) and Tyr-387.

The protein in the C-terminal section; belongs to the phosphoglycerate mutase family.

The enzyme catalyses beta-D-fructose 2,6-bisphosphate + H2O = beta-D-fructose 6-phosphate + phosphate. This is predominantly if not solely a fructose-2,6-bisphosphatase. This Schizosaccharomyces pombe (strain 972 / ATCC 24843) (Fission yeast) protein is Probable fructose-2,6-bisphosphatase C732.02c.